We begin with the raw amino-acid sequence, 129 residues long: Small ribosomal subunit protein uS11 (129 aa).

Belongs to the universal ribosomal protein uS11 family. As to quaternary structure, part of the 30S ribosomal subunit. Interacts with proteins S7 and S18. Binds to IF-3.

Functionally, located on the platform of the 30S subunit, it bridges several disparate RNA helices of the 16S rRNA. Forms part of the Shine-Dalgarno cleft in the 70S ribosome. In Parabacteroides distasonis (strain ATCC 8503 / DSM 20701 / CIP 104284 / JCM 5825 / NCTC 11152), this protein is Small ribosomal subunit protein uS11.